Reading from the N-terminus, the 132-residue chain is Putative RNase AF_0947 (132 aa).

Residues Arg-91 and His-96 contribute to the active site. The short motif at 91-98 (RNAIAHHY) is the RX(4)HXY motif element. Tyr-98 is modified (O-di-AMP-tyrosine).

It belongs to the HepT RNase toxin family. As to quaternary structure, homodimer, probably forms a complex with cognate antitoxin AF_0948. Modified by cognate antitoxin AF_0948; probably at least 2 successive AMPylation events occur on Tyr-98.

Probable toxic component of a putative type VII toxin-antitoxin (TA) system, probably an RNase. Probably neutralized by cognate antitoxin AF_0948. Neutralization may be due to AMPylation by AF_0948. The chain is Putative RNase AF_0947 from Archaeoglobus fulgidus (strain ATCC 49558 / DSM 4304 / JCM 9628 / NBRC 100126 / VC-16).